Here is a 460-residue protein sequence, read N- to C-terminus: Omega-3 fatty acid desaturase, chloroplastic (460 aa).

The Histidine box-1 motif lies at 177–181; that stretch reads HDCGH. The Histidine box-2 motif lies at 213-217; that stretch reads HRTHH. The short motif at 380-384 is the Histidine box-3 element; sequence HVIHH.

Belongs to the fatty acid desaturase type 1 family.

It is found in the plastid. The protein resides in the chloroplast membrane. It functions in the pathway lipid metabolism; polyunsaturated fatty acid biosynthesis. Its function is as follows. Chloroplast omega-3 fatty acid desaturase introduces the third double bond in the biosynthesis of 16:3 and 18:3 fatty acids, important constituents of plant membranes. It is thought to use ferredoxin as an electron donor and to act on fatty acids esterified to galactolipids, sulfolipids and phosphatidylglycerol. The sequence is that of Omega-3 fatty acid desaturase, chloroplastic (FAD7A-1) from Ricinus communis (Castor bean).